The chain runs to 353 residues: Chloroplastic lipocalin (353 aa).

Over residues 1 to 18 the composition is skewed to low complexity; that stretch reads MILLSSSISLSRPVSSQS. A disordered region spans residues 1-27; it reads MILLSSSISLSRPVSSQSFSPPAATST. A chloroplast-targeting transit peptide spans 1–39; the sequence is MILLSSSISLSRPVSSQSFSPPAATSTRRSHSSVTVKCC. Cysteine 163 and cysteine 299 are oxidised to a cystine.

Belongs to the calycin superfamily. Lipocalin family. As to expression, expressed in leaves at low levels (at protein levels). Present in seeds.

It localises to the plastid. The protein localises to the chloroplast thylakoid lumen. Functionally, lipocalin that prevents thylakoidal membrane lipids peroxidation and confers protection against oxidative stress, especially mediated by singlet oxygen in response to high light and other stress (e.g. heat shocks). Required for seed longevity by ensuring polyunsaturated lipids integrity. This is Chloroplastic lipocalin from Arabidopsis thaliana (Mouse-ear cress).